A 322-amino-acid polypeptide reads, in one-letter code: Phosphate acetyltransferase (322 aa).

This sequence belongs to the phosphate acetyltransferase and butyryltransferase family.

The protein localises to the cytoplasm. The enzyme catalyses acetyl-CoA + phosphate = acetyl phosphate + CoA. It functions in the pathway metabolic intermediate biosynthesis; acetyl-CoA biosynthesis; acetyl-CoA from acetate: step 2/2. The protein is Phosphate acetyltransferase (pta) of Mycoplasma capricolum subsp. capricolum (strain California kid / ATCC 27343 / NCTC 10154).